The chain runs to 512 residues: Ferredoxin--nitrite reductase (512 aa).

[4Fe-4S] cluster-binding residues include C396, C402, C437, and C441. Residue C441 coordinates siroheme.

Belongs to the nitrite and sulfite reductase 4Fe-4S domain family.

The enzyme catalyses 6 oxidized [2Fe-2S]-[ferredoxin] + NH4(+) + 2 H2O = nitrite + 6 reduced [2Fe-2S]-[ferredoxin] + 8 H(+). The polypeptide is Ferredoxin--nitrite reductase (nirA) (Synechococcus elongatus (strain ATCC 33912 / PCC 7942 / FACHB-805) (Anacystis nidulans R2)).